A 208-amino-acid polypeptide reads, in one-letter code: Claudin-like protein ZF-A89 (208 aa).

The next 4 membrane-spanning stretches (helical) occupy residues 8 to 28 (LLAT…CALP), 82 to 102 (ALVV…IAGG), 117 to 137 (VVVA…IPVC), and 160 to 180 (LGAS…GGAL).

The protein belongs to the claudin family.

The protein localises to the cell membrane. Its subcellular location is the cell junction. The protein resides in the tight junction. In terms of biological role, component of tight junction (TJ) strands. The sequence is that of Claudin-like protein ZF-A89 (cldnd) from Danio rerio (Zebrafish).